The sequence spans 375 residues: Cinnamyl alcohol dehydrogenase 3 (375 aa).

Cysteine 44 lines the Zn(2+) pocket. Serine 46 is a binding site for NADP(+). Histidine 66, glutamate 67, cysteine 97, cysteine 100, cysteine 103, cysteine 111, and cysteine 160 together coordinate Zn(2+). Residues threonine 164, 186-191, 209-214, threonine 249, glycine 273, and 296-298 contribute to the NADP(+) site; these read GLGGLG, SRSSEK, and SQI.

It belongs to the zinc-containing alcohol dehydrogenase family. As to quaternary structure, homodimer. The cofactor is Zn(2+). As to expression, expressed in the root tips. Expressed in the apical meristematic regions, leaf veins and at the base of the trichomes. Expressed at the base of the stems. Expressed in the abscission zones of newly formed siliques.

It catalyses the reaction (E)-cinnamyl alcohol + NADP(+) = (E)-cinnamaldehyde + NADPH + H(+). It carries out the reaction (E)-coniferol + NADP(+) = (E)-coniferaldehyde + NADPH + H(+). The catalysed reaction is (E)-sinapyl alcohol + NADP(+) = (E)-sinapaldehyde + NADPH + H(+). The enzyme catalyses (E)-4-coumaroyl alcohol + NADP(+) = (E)-4-coumaraldehyde + NADPH + H(+). It catalyses the reaction (E)-caffeyl alcohol + NADP(+) = (E)-caffeyl aldehyde + NADPH + H(+). It participates in aromatic compound metabolism; phenylpropanoid biosynthesis. Its function is as follows. Involved in lignin biosynthesis. Catalyzes the final step specific for the production of lignin monomers. Catalyzes the NADPH-dependent reduction of coniferaldehyde, 5-hydroxyconiferaldehyde, sinapaldehyde, 4-coumaraldehyde and caffeyl aldehyde to their respective alcohols. The sequence is that of Cinnamyl alcohol dehydrogenase 3 from Arabidopsis thaliana (Mouse-ear cress).